The primary structure comprises 296 residues: Chelated iron transport system membrane protein YfeB (296 aa).

In terms of domain architecture, ABC transporter spans 11 to 246; it reads LVVDNVTVTY…NLEMTFGGVL (236 aa). Position 44–51 (44–51) interacts with ATP; the sequence is GVNGSGKS. A disordered region spans residues 276–296; that stretch reads VFYGHTKNDPPAQSQSKEQNS. Positions 286-296 are enriched in polar residues; the sequence is PAQSQSKEQNS.

Belongs to the ABC transporter superfamily.

The protein localises to the cell inner membrane. Its function is as follows. Part of an ATP-driven transport system YfeABCD for chelated iron. This Yersinia pestis protein is Chelated iron transport system membrane protein YfeB (yfeB).